A 160-amino-acid chain; its full sequence is Large ribosomal subunit protein eL29 (160 aa).

Basic residues predominate over residues 1-26; sequence MAKSKNHTTHNQSRKWHRNGIKKPRS. Residues 1 to 32 form a disordered region; that stretch reads MAKSKNHTTHNQSRKWHRNGIKKPRSQRYESL. K5 is modified (N6-methyllysine). Phosphoserine is present on S31. K33 carries the post-translational modification N6-acetyllysine. The interval 119–160 is disordered; sequence CRPKSQAKAQSKAKATAGGTAAAPVPPASAPKGAQAPTKAPQ. The segment covering 121–141 has biased composition (low complexity); it reads PKSQAKAQSKAKATAGGTAAA.

The protein belongs to the eukaryotic ribosomal protein eL29 family. In terms of assembly, component of the large ribosomal subunit.

It is found in the cytoplasm. In terms of biological role, component of the large ribosomal subunit. The ribosome is a large ribonucleoprotein complex responsible for the synthesis of proteins in the cell. This Sus scrofa (Pig) protein is Large ribosomal subunit protein eL29 (RPL29).